The following is a 669-amino-acid chain: Dymeclin (669 aa).

A lipid anchor (N-myristoyl glycine) is attached at Gly2.

This sequence belongs to the dymeclin family. Myristoylated in vitro; myristoylation is not essential for protein targeting to Golgi compartment.

Its subcellular location is the cytoplasm. It is found in the golgi apparatus. In terms of biological role, necessary for correct organization of Golgi apparatus. The protein is Dymeclin (DYM) of Gallus gallus (Chicken).